The following is a 388-amino-acid chain: Chorismate synthase (388 aa).

2 residues coordinate NADP(+): Arg-39 and Arg-45. FMN contacts are provided by residues 132-134 (RSS), 251-252 (NA), Gly-296, 311-315 (KPIPT), and Arg-337.

The protein belongs to the chorismate synthase family. Homotetramer. FMNH2 is required as a cofactor.

It catalyses the reaction 5-O-(1-carboxyvinyl)-3-phosphoshikimate = chorismate + phosphate. It participates in metabolic intermediate biosynthesis; chorismate biosynthesis; chorismate from D-erythrose 4-phosphate and phosphoenolpyruvate: step 7/7. Functionally, catalyzes the anti-1,4-elimination of the C-3 phosphate and the C-6 proR hydrogen from 5-enolpyruvylshikimate-3-phosphate (EPSP) to yield chorismate, which is the branch point compound that serves as the starting substrate for the three terminal pathways of aromatic amino acid biosynthesis. This reaction introduces a second double bond into the aromatic ring system. The sequence is that of Chorismate synthase from Staphylococcus epidermidis (strain ATCC 35984 / DSM 28319 / BCRC 17069 / CCUG 31568 / BM 3577 / RP62A).